The following is a 184-amino-acid chain: 2-C-methyl-D-erythritol 2,4-cyclodiphosphate synthase (184 aa).

A divalent metal cation-binding residues include Asp17 and His19. 4-CDP-2-C-methyl-D-erythritol 2-phosphate-binding positions include 17 to 19 (DVH) and 47 to 48 (HS). His55 contributes to the a divalent metal cation binding site. 4-CDP-2-C-methyl-D-erythritol 2-phosphate-binding positions include 74–78 (FPNTD), Phe152, and Arg155.

The protein belongs to the IspF family. Homotrimer. The cofactor is a divalent metal cation.

The catalysed reaction is 4-CDP-2-C-methyl-D-erythritol 2-phosphate = 2-C-methyl-D-erythritol 2,4-cyclic diphosphate + CMP. It participates in isoprenoid biosynthesis; isopentenyl diphosphate biosynthesis via DXP pathway; isopentenyl diphosphate from 1-deoxy-D-xylulose 5-phosphate: step 4/6. Involved in the biosynthesis of isopentenyl diphosphate (IPP) and dimethylallyl diphosphate (DMAPP), two major building blocks of isoprenoid compounds. Catalyzes the conversion of 4-diphosphocytidyl-2-C-methyl-D-erythritol 2-phosphate (CDP-ME2P) to 2-C-methyl-D-erythritol 2,4-cyclodiphosphate (ME-CPP) with a corresponding release of cytidine 5-monophosphate (CMP). This chain is 2-C-methyl-D-erythritol 2,4-cyclodiphosphate synthase, found in Anaplasma marginale (strain St. Maries).